A 129-amino-acid chain; its full sequence is MVRIAGTDIPDNKQVYFSLQYIFGIGPARSEKVLVQAGVDKTIRVNKLTDEEINRLREIIDKEYRVEGDLRKEITLNIKRLIDIGCYRGIRHKHNLPVRGQRTKTNARTRRGPRKTVAGRGQKRGATKK.

The segment covering 95-114 (NLPVRGQRTKTNARTRRGPR) has biased composition (basic residues). A disordered region spans residues 95–129 (NLPVRGQRTKTNARTRRGPRKTVAGRGQKRGATKK).

Belongs to the universal ribosomal protein uS13 family. In terms of assembly, part of the 30S ribosomal subunit. Forms a loose heterodimer with protein S19. Forms two bridges to the 50S subunit in the 70S ribosome.

Located at the top of the head of the 30S subunit, it contacts several helices of the 16S rRNA. In the 70S ribosome it contacts the 23S rRNA (bridge B1a) and protein L5 of the 50S subunit (bridge B1b), connecting the 2 subunits; these bridges are implicated in subunit movement. Contacts the tRNAs in the A and P-sites. The sequence is that of Small ribosomal subunit protein uS13 from Dehalococcoides mccartyi (strain ATCC BAA-2100 / JCM 16839 / KCTC 5957 / BAV1).